Consider the following 698-residue polypeptide: FHF complex subunit HOOK-interacting protein 2B (698 aa).

The protein belongs to the FHIP family.

This is FHF complex subunit HOOK-interacting protein 2B (fhip2b) from Xenopus tropicalis (Western clawed frog).